The primary structure comprises 491 residues: Probable glycine dehydrogenase (decarboxylating) subunit 2 (491 aa).

Lys264 bears the N6-(pyridoxal phosphate)lysine mark.

It belongs to the GcvP family. C-terminal subunit subfamily. The glycine cleavage system is composed of four proteins: P, T, L and H. In this organism, the P 'protein' is a heterodimer of two subunits. It depends on pyridoxal 5'-phosphate as a cofactor.

It catalyses the reaction N(6)-[(R)-lipoyl]-L-lysyl-[glycine-cleavage complex H protein] + glycine + H(+) = N(6)-[(R)-S(8)-aminomethyldihydrolipoyl]-L-lysyl-[glycine-cleavage complex H protein] + CO2. In terms of biological role, the glycine cleavage system catalyzes the degradation of glycine. The P protein binds the alpha-amino group of glycine through its pyridoxal phosphate cofactor; CO(2) is released and the remaining methylamine moiety is then transferred to the lipoamide cofactor of the H protein. The sequence is that of Probable glycine dehydrogenase (decarboxylating) subunit 2 from Coxiella burnetii (strain Dugway 5J108-111).